Here is a 362-residue protein sequence, read N- to C-terminus: 3-dehydroquinate synthase (362 aa).

NAD(+) is bound by residues 71-76, 105-109, 129-130, lysine 142, lysine 151, and 169-172; these read DGEQYK, GVVGD, TT, and CLKT. Positions 184, 247, and 264 each coordinate Zn(2+).

It belongs to the sugar phosphate cyclases superfamily. Dehydroquinate synthase family. The cofactor is Co(2+). It depends on Zn(2+) as a cofactor. NAD(+) serves as cofactor.

Its subcellular location is the cytoplasm. The enzyme catalyses 7-phospho-2-dehydro-3-deoxy-D-arabino-heptonate = 3-dehydroquinate + phosphate. The protein operates within metabolic intermediate biosynthesis; chorismate biosynthesis; chorismate from D-erythrose 4-phosphate and phosphoenolpyruvate: step 2/7. Functionally, catalyzes the conversion of 3-deoxy-D-arabino-heptulosonate 7-phosphate (DAHP) to dehydroquinate (DHQ). The protein is 3-dehydroquinate synthase of Escherichia coli (strain 55989 / EAEC).